The primary structure comprises 459 residues: Autophagy-related protein 18 (459 aa).

WD repeat units follow at residues 1-39 and 188-228; these read MTSPALNFITFNQDHSCLAVGTSKGFRIYHTDPFSRIFS and AHRS…KLYQ. The necessary for proper localization to vacuole membrane stretch occupies residues 229-232; it reads FRRG. The short motif at 229-233 is the L/FRRG motif element; that stretch reads FRRGT. A WD 3 repeat occupies 233–272; it reads TYPSTIYSMSFNLSSTLLCVSSTSDTIHIFRLGAPPGNTT. Residues 264 to 339 are disordered; the sequence is LGAPPGNTTP…RGSGSFSSML (76 aa). Low complexity predominate over residues 265–277; it reads GAPPGNTTPAGAP. The segment covering 285-296 has biased composition (basic and acidic residues); the sequence is RQDRWSRARSYD. Positions 319 to 330 are enriched in gly residues; it reads PGAGNNQGGHTR. One copy of the WD 4 repeat lies at 393 to 433; the sequence is APGGPLRSVVAMSSSSPQVMVVTSDGGFYVYNIDMEHGGEG.

Belongs to the WD repeat PROPPIN family. Component of the PI(3,5)P2 regulatory complex. Interacts with ATG2 and ATG9. The ATG2-ATG18 complex is essential for autophagosome formation.

The protein resides in the preautophagosomal structure membrane. It localises to the vacuole membrane. It is found in the endosome membrane. Functionally, component of the PI(3,5)P2 regulatory complex that regulates both the synthesis and turnover of phosphatidylinositol 3,5-bisphosphate (PtdIns(3,5)P2). Plays an important role in osmotically-induced vacuole fragmentation. Required for cytoplasm to vacuole transport (Cvt) vesicle formation, pexophagy and starvation-induced autophagy. Involved in correct ATG9 trafficking to the pre-autophagosomal structure. With ATG2, protects ATG8 from ATG4-mediated cleavage. Autophagy is required for proper vegetative growth, asexual/sexual reproduction, and full virulence. Autophagy is particularly involved in the biosynthesis of deoxynivalenol (DON), an important virulence determinant. This is Autophagy-related protein 18 from Gibberella zeae (strain ATCC MYA-4620 / CBS 123657 / FGSC 9075 / NRRL 31084 / PH-1) (Wheat head blight fungus).